A 640-amino-acid polypeptide reads, in one-letter code: Threonine--tRNA ligase (640 aa).

The region spanning Met-1–Thr-61 is the TGS domain. The catalytic stretch occupies residues Asp-243–Pro-534. Zn(2+) contacts are provided by Cys-334, His-385, and His-511.

Belongs to the class-II aminoacyl-tRNA synthetase family. Homodimer. Zn(2+) is required as a cofactor.

It is found in the cytoplasm. It carries out the reaction tRNA(Thr) + L-threonine + ATP = L-threonyl-tRNA(Thr) + AMP + diphosphate + H(+). Functionally, catalyzes the attachment of threonine to tRNA(Thr) in a two-step reaction: L-threonine is first activated by ATP to form Thr-AMP and then transferred to the acceptor end of tRNA(Thr). Also edits incorrectly charged L-seryl-tRNA(Thr). The polypeptide is Threonine--tRNA ligase (Dichelobacter nodosus (strain VCS1703A)).